The primary structure comprises 177 residues: uncharacterized protein (177 aa).

It to B.subtilis YutG.

This is an uncharacterized protein from Bacillus subtilis (strain 168).